We begin with the raw amino-acid sequence, 183 residues long: Capsid protein (183 aa).

The tract at residues 136-183 (NAPILSTLPETTVVRRRGRSPRRRTPSPRRRRSQSPRRRRSQSRESQC) is disordered. Basic residues predominate over residues 149–176 (VRRRGRSPRRRTPSPRRRRSQSPRRRRS). Residues Ser-155, Ser-162, and Ser-170 each carry the phosphoserine; by host modification. Residues 155–161 (SPRRRTP) form a 1; half-length repeat. The 3 X 8 AA repeats of S-P-R-R-R-[PR]-S-Q stretch occupies residues 155–177 (SPRRRTPSPRRRRSQSPRRRRSQ). The short motif at 158-175 (RRTPSPRRRRSQSPRRRR) is the Bipartite nuclear localization signal element. Repeat copies occupy residues 162–169 (SPRRRRSQ) and 170–177 (SPRRRRSQ). Positions 177–183 (QSRESQC) are RNA binding.

Belongs to the orthohepadnavirus core antigen family. Homodimerizes, then multimerizes. Interacts with cytosol exposed regions of viral L glycoprotein present in the reticulum-to-Golgi compartment. Interacts with human FLNB. Phosphorylated form interacts with host importin alpha; this interaction depends on the exposure of the NLS, which itself depends upon genome maturation and/or phosphorylation of the capsid protein. Interacts with host NUP153. Post-translationally, phosphorylated by host SRPK1, SRPK2, and maybe protein kinase C or GAPDH. Phosphorylation is critical for pregenomic RNA packaging. Protein kinase C phosphorylation is stimulated by HBx protein and may play a role in transport of the viral genome to the nucleus at the late step during the viral replication cycle.

The protein localises to the virion. The protein resides in the host cytoplasm. In terms of biological role, self assembles to form an icosahedral capsid. Most capsids appear to be large particles with an icosahedral symmetry of T=4 and consist of 240 copies of capsid protein, though a fraction forms smaller T=3 particles consisting of 180 capsid proteins. Entering capsids are transported along microtubules to the nucleus. Phosphorylation of the capsid is thought to induce exposure of nuclear localization signal in the C-terminal portion of the capsid protein that allows binding to the nuclear pore complex via the importin (karyopherin-) alpha and beta. Capsids are imported in intact form through the nuclear pore into the nuclear basket, where it probably binds NUP153. Only capsids that contain the mature viral genome can release the viral DNA and capsid protein into the nucleoplasm. Immature capsids get stuck in the basket. Capsids encapsulate the pre-genomic RNA and the P protein. Pre-genomic RNA is reverse-transcribed into DNA while the capsid is still in the cytoplasm. The capsid can then either be directed to the nucleus, providing more genomes for transcription, or bud through the endoplasmic reticulum to provide new virions. The sequence is that of Capsid protein from Hepatitis B virus genotype D subtype ayw (isolate Italy/CI/1992) (HBV-D).